Consider the following 60-residue polypeptide: Large ribosomal subunit protein bL32 (60 aa).

The segment covering 1-16 (MAVPKRKTSPSKRGMR) has biased composition (basic residues). Positions 1–60 (MAVPKRKTSPSKRGMRRSADALKAPTYVEDKNSGELRRPHHVDLKTGMYRGRQVLEPKEA) are disordered. The span at 28 to 44 (VEDKNSGELRRPHHVDL) shows a compositional bias: basic and acidic residues.

Belongs to the bacterial ribosomal protein bL32 family.

The protein is Large ribosomal subunit protein bL32 of Chelativorans sp. (strain BNC1).